The chain runs to 1442 residues: Clustered mitochondria protein homolog (1442 aa).

Disordered regions lie at residues 38-100 (NYRN…KKPD) and 237-258 (GRSE…KDRP). Positions 82-100 (SEGEQQKDKTAAEDKKKPD) are enriched in basic and acidic residues. The Clu domain maps to 394-636 (RAEDTFSSKL…RTFPPDVNFL (243 aa)). Composition is skewed to basic and acidic residues over residues 696-714 (QKQE…EPKA) and 737-763 (ESKE…KVET). Disordered regions lie at residues 696-763 (QKQE…KVET) and 949-984 (SESD…SFQC). A compositionally biased stretch (polar residues) spans 949–958 (SESDALTKSG). TPR repeat units lie at residues 1087 to 1120 (AYNF…LNNV), 1213 to 1246 (ALLD…NIKY), and 1248 to 1281 (GEKS…EKET). The disordered stretch occupies residues 1373–1442 (RQKEGGTSEQ…SSNASAQQVS (70 aa)). The segment covering 1380 to 1390 (SEQAAAAQASQ) has biased composition (low complexity). Residues 1424–1442 (ASSSKQADNSSNASAQQVS) show a composition bias toward polar residues.

This sequence belongs to the CLU family.

The protein resides in the cytoplasm. In terms of biological role, mRNA-binding protein involved in proper cytoplasmic distribution of mitochondria. In Aedes aegypti (Yellowfever mosquito), this protein is Clustered mitochondria protein homolog.